A 214-amino-acid polypeptide reads, in one-letter code: Outer-membrane lipoprotein LolB (214 aa).

An N-terminal signal peptide occupies residues 1–25 (MNNLKRFTKSIFSCIALSGLLFLGG). C26 carries N-palmitoyl cysteine lipidation. A lipid anchor (S-diacylglycerol cysteine) is attached at C26.

This sequence belongs to the LolB family. Monomer.

The protein localises to the cell outer membrane. In terms of biological role, plays a critical role in the incorporation of lipoproteins in the outer membrane after they are released by the LolA protein. The protein is Outer-membrane lipoprotein LolB of Shewanella sp. (strain MR-7).